The primary structure comprises 80 residues: Protein transport protein SSS1 (80 aa).

Residues 1–46 (MARASEKGEEKKQSNNQVEKLVEAPVEFVREGTQFLAKCKKPDLKE) lie on the Cytoplasmic side of the membrane. A helical membrane pass occupies residues 47–75 (YTKIVKAVGIGFIAVGIIGYAIKLIHIPI). Topologically, residues 76 to 80 (RYVIV) are extracellular.

The protein belongs to the SecE/SEC61-gamma family. As to quaternary structure, component of the heterotrimeric Sec61 complex, which is composed of SSH1, SBH1 and SSS1. Presumably three to four Sec61 heterotrimers assemble into an oligomeric ring with a central aqueous pore. In cotranslational ER import, the pore diameter varies from 9-15 A in a ribosome-free resting state to 40-60 A in a functional state when associated with the ribosome. The Sec61 complex is part of a channel-forming translocon complex whose composition seem to change dependent upon different functional states. During post-translational ER import the Sec61 complex associates with the Sec62/63 complex to form the Sec complex. SSH1 is a component of the heterotrimeric Ssh1 complex, which is composed of SSH1, SBH2 and SSS1. SSS1 interacts with OST1, OST4, SWP1 and WBP1, components of the OT complex.

The protein resides in the endoplasmic reticulum membrane. Functionally, part of the Sec61 complex, which is the major component of channel-forming translocon complex that mediates protein translocation across the endoplasmic reticulum (ER). The functional states of the translocon complex include co- and post-translational ER import, cotranslational membrane protein integration and retrograde transport of misfolded proteins out of the ER. In the cotranslational pathway, ribosomes synthesizing presecretory proteins are targeted to the translocon by the cytosolic signal recognition particle (SRP) and its ER-localized receptor. The association of the Sec61 complex with the ribosome is mediated by the 28S rRNA of the large ribosomal subunit. SRP-independent post-translational translocation requires the association of additional factors, such as the Sec62/63 complex and KAR2. Also part of the Ssh1 complex, which probably is the major component of a channel-forming translocon complex that may function exclusively in the cotranslational pathway of protein ER import. In Saccharomyces cerevisiae (strain ATCC 204508 / S288c) (Baker's yeast), this protein is Protein transport protein SSS1 (SSS1).